The sequence spans 207 residues: 2,3-bisphosphoglycerate-dependent phosphoglycerate mutase (207 aa).

Substrate-binding positions include 10-17, 23-24, Arg62, 89-92, Lys100, 116-117, and 160-161; these read RHGQSEWN, TG, ERDY, RR, and GN. His11 functions as the Tele-phosphohistidine intermediate in the catalytic mechanism. Catalysis depends on Glu89, which acts as the Proton donor/acceptor.

It belongs to the phosphoglycerate mutase family. BPG-dependent PGAM subfamily. In terms of assembly, homodimer.

It catalyses the reaction (2R)-2-phosphoglycerate = (2R)-3-phosphoglycerate. It functions in the pathway carbohydrate degradation; glycolysis; pyruvate from D-glyceraldehyde 3-phosphate: step 3/5. Functionally, catalyzes the interconversion of 2-phosphoglycerate and 3-phosphoglycerate. The protein is 2,3-bisphosphoglycerate-dependent phosphoglycerate mutase of Bradyrhizobium diazoefficiens (strain JCM 10833 / BCRC 13528 / IAM 13628 / NBRC 14792 / USDA 110).